Reading from the N-terminus, the 88-residue chain is MKLLVVYDVSDDSKRNKLANNLKKLGLERIQRSAFEGDIDSQRVKDLVRVVKLIVDTNTDIVHIIPLGIRDWERRIVIGREGLEEWLV.

Residue aspartate 8 participates in Mg(2+) binding.

This sequence belongs to the CRISPR-associated endoribonuclease Cas2 protein family. As to quaternary structure, homodimer, forms a heterotetramer with a Cas1 homodimer. Mg(2+) is required as a cofactor.

CRISPR (clustered regularly interspaced short palindromic repeat), is an adaptive immune system that provides protection against mobile genetic elements (viruses, transposable elements and conjugative plasmids). CRISPR clusters contain sequences complementary to antecedent mobile elements and target invading nucleic acids. CRISPR clusters are transcribed and processed into CRISPR RNA (crRNA). Functions as a ssRNA-specific endoribonuclease. Involved in the integration of spacer DNA into the CRISPR cassette. The sequence is that of CRISPR-associated endoribonuclease Cas2 2 (cas22) from Saccharolobus solfataricus (strain ATCC 35092 / DSM 1617 / JCM 11322 / P2) (Sulfolobus solfataricus).